We begin with the raw amino-acid sequence, 129 residues long: S-adenosylmethionine decarboxylase proenzyme (129 aa).

S63 acts as the Schiff-base intermediate with substrate; via pyruvic acid in catalysis. At S63 the chain carries Pyruvic acid (Ser); by autocatalysis. Catalysis depends on H68, which acts as the Proton acceptor; for processing activity. C83 (proton donor; for catalytic activity) is an active-site residue.

The protein belongs to the prokaryotic AdoMetDC family. Type 1 subfamily. Heterotetramer of two alpha and two beta chains arranged as a dimer of alpha/beta heterodimers. Requires pyruvate as cofactor. Post-translationally, is synthesized initially as an inactive proenzyme. Formation of the active enzyme involves a self-maturation process in which the active site pyruvoyl group is generated from an internal serine residue via an autocatalytic post-translational modification. Two non-identical subunits are generated from the proenzyme in this reaction, and the pyruvate is formed at the N-terminus of the alpha chain, which is derived from the carboxyl end of the proenzyme. The post-translation cleavage follows an unusual pathway, termed non-hydrolytic serinolysis, in which the side chain hydroxyl group of the serine supplies its oxygen atom to form the C-terminus of the beta chain, while the remainder of the serine residue undergoes an oxidative deamination to produce ammonia and the pyruvoyl group blocking the N-terminus of the alpha chain.

The catalysed reaction is S-adenosyl-L-methionine + H(+) = S-adenosyl 3-(methylsulfanyl)propylamine + CO2. It functions in the pathway amine and polyamine biosynthesis; S-adenosylmethioninamine biosynthesis; S-adenosylmethioninamine from S-adenosyl-L-methionine: step 1/1. In terms of biological role, catalyzes the decarboxylation of S-adenosylmethionine to S-adenosylmethioninamine (dcAdoMet), the propylamine donor required for the synthesis of the polyamines spermine and spermidine from the diamine putrescine. In Shouchella clausii (strain KSM-K16) (Alkalihalobacillus clausii), this protein is S-adenosylmethionine decarboxylase proenzyme.